Reading from the N-terminus, the 150-residue chain is Transcription antitermination protein NusB (150 aa).

The protein belongs to the NusB family.

Involved in transcription antitermination. Required for transcription of ribosomal RNA (rRNA) genes. Binds specifically to the boxA antiterminator sequence of the ribosomal RNA (rrn) operons. The protein is Transcription antitermination protein NusB of Streptococcus pyogenes serotype M4 (strain MGAS10750).